A 222-amino-acid polypeptide reads, in one-letter code: E3 ubiquitin-protein ligase RNF138 (222 aa).

An RING-type zinc finger spans residues Cys-17–Arg-57. The Zn(2+) site is built by Cys-85, Cys-88, His-100, and Cys-104. A C2HC RNF-type zinc finger spans residues Cys-85 to Cys-104. 2 consecutive C2H2-type zinc fingers follow at residues Tyr-134 to His-157 and Met-164 to His-192. The UIM domain maps to Ile-202 to Ile-220.

In terms of assembly, interacts with nlk.2 (via C-terminus) and ube2k. Post-translationally, auto-ubiquitinated.

The protein resides in the chromosome. The enzyme catalyses S-ubiquitinyl-[E2 ubiquitin-conjugating enzyme]-L-cysteine + [acceptor protein]-L-lysine = [E2 ubiquitin-conjugating enzyme]-L-cysteine + N(6)-ubiquitinyl-[acceptor protein]-L-lysine.. It participates in protein modification; protein ubiquitination. E3 ubiquitin-protein ligase involved in DNA damage response by promoting DNA resection and homologous recombination. Recruited to sites of double-strand breaks following DNA damage and specifically promotes double-strand break repair via homologous recombination. Together with nlk.2, involved in the ubiquitination and degradation of TCF/LEF. Also exhibits auto-ubiquitination activity in combination with ube2k. May act as a negative regulator in the Wnt/beta-catenin-mediated signaling pathway. The chain is E3 ubiquitin-protein ligase RNF138 (rnf138) from Xenopus laevis (African clawed frog).